The chain runs to 146 residues: Transcriptional regulator MraZ (146 aa).

SpoVT-AbrB domains lie at 5-47 and 76-119; these read EYYH…TITD and SIQV…AKEK.

Belongs to the MraZ family. As to quaternary structure, forms oligomers.

It localises to the cytoplasm. The protein resides in the nucleoid. The polypeptide is Transcriptional regulator MraZ (Dictyoglomus thermophilum (strain ATCC 35947 / DSM 3960 / H-6-12)).